Here is a 468-residue protein sequence, read N- to C-terminus: Aspartate ammonia-lyase (468 aa).

T101, S140, T141, N142, T187, and H188 together coordinate L-aspartate. The SS loop stretch occupies residues 317-326 (GSSIMPGKVN). The active-site Proton acceptor is the S318. 2 residues coordinate L-aspartate: S319 and K324.

The protein belongs to the class-II fumarase/aspartase family. Aspartase subfamily. In terms of assembly, homotetramer.

It catalyses the reaction L-aspartate = fumarate + NH4(+). Its activity is regulated as follows. Unlike E.coli aspartase, the enzyme is not activated by the presence of divalent metal ions at alkaline pH. Functionally, catalyzes the reversible conversion of L-aspartate to fumarate and ammonia. Is highly specific for L-aspartate in the deamination reaction, and cannot use alternative substrates such as D-aspartic acid, alpha-methyl-DL-aspartic acid, beta-methyl-DL-aspartic acid or L-glutamate. In the reverse reaction, alternative nucleophiles (such as hydroxylamine, hydrazine, methoxylamine and methylamine) can replace ammonia in vitro, leading to the formation of N-substituted aspartic acid derivatives. The protein is Aspartate ammonia-lyase of Bacillus sp.